Consider the following 338-residue polypeptide: 4-hydroxy-3-methylbut-2-enyl diphosphate reductase (338 aa).

[4Fe-4S] cluster is bound at residue C21. H50 and H83 together coordinate (2E)-4-hydroxy-3-methylbut-2-enyl diphosphate. Residues H50 and H83 each contribute to the dimethylallyl diphosphate site. Isopentenyl diphosphate is bound by residues H50 and H83. A [4Fe-4S] cluster-binding site is contributed by C105. H133 contributes to the (2E)-4-hydroxy-3-methylbut-2-enyl diphosphate binding site. Dimethylallyl diphosphate is bound at residue H133. H133 contacts isopentenyl diphosphate. Catalysis depends on E135, which acts as the Proton donor. Position 173 (T173) interacts with (2E)-4-hydroxy-3-methylbut-2-enyl diphosphate. Position 203 (C203) interacts with [4Fe-4S] cluster. 4 residues coordinate (2E)-4-hydroxy-3-methylbut-2-enyl diphosphate: S231, S232, N233, and S276. Residues S231, S232, N233, and S276 each coordinate dimethylallyl diphosphate. 4 residues coordinate isopentenyl diphosphate: S231, S232, N233, and S276.

Belongs to the IspH family. [4Fe-4S] cluster serves as cofactor.

It catalyses the reaction isopentenyl diphosphate + 2 oxidized [2Fe-2S]-[ferredoxin] + H2O = (2E)-4-hydroxy-3-methylbut-2-enyl diphosphate + 2 reduced [2Fe-2S]-[ferredoxin] + 2 H(+). The enzyme catalyses dimethylallyl diphosphate + 2 oxidized [2Fe-2S]-[ferredoxin] + H2O = (2E)-4-hydroxy-3-methylbut-2-enyl diphosphate + 2 reduced [2Fe-2S]-[ferredoxin] + 2 H(+). It functions in the pathway isoprenoid biosynthesis; dimethylallyl diphosphate biosynthesis; dimethylallyl diphosphate from (2E)-4-hydroxy-3-methylbutenyl diphosphate: step 1/1. Its pathway is isoprenoid biosynthesis; isopentenyl diphosphate biosynthesis via DXP pathway; isopentenyl diphosphate from 1-deoxy-D-xylulose 5-phosphate: step 6/6. In terms of biological role, catalyzes the conversion of 1-hydroxy-2-methyl-2-(E)-butenyl 4-diphosphate (HMBPP) into a mixture of isopentenyl diphosphate (IPP) and dimethylallyl diphosphate (DMAPP). Acts in the terminal step of the DOXP/MEP pathway for isoprenoid precursor biosynthesis. This chain is 4-hydroxy-3-methylbut-2-enyl diphosphate reductase, found in Streptomyces avermitilis (strain ATCC 31267 / DSM 46492 / JCM 5070 / NBRC 14893 / NCIMB 12804 / NRRL 8165 / MA-4680).